A 401-amino-acid chain; its full sequence is Probable thioesterase FGSG_00047 (401 aa).

The tract at residues A379–S401 is disordered.

Belongs to the AMT4 thioesterase family.

It functions in the pathway mycotoxin biosynthesis. Its function is as follows. Probable thioesterase; part of the gene cluster that mediates the biosynthesis of gramillins A and B, bicyclic lipopeptides that induce cell death in maize leaves but not in wheat leaves. The nonribosomal peptide synthetase GRA1 incorporates respectively a glutamic adic (Glu), a leucine (Leu), a serine (Ser), a hydroxyglutamine (HOGln), a 2-amino decanoic acid, and 2 cysteins (CysB and CysA). The biosynthesis of 2-amino decanoic acid incorporated in gramillins could be initiated by a fatty acid synthase composed of the alpha and beta subunits FGSG_00036 and FGSG_11656. The cytochrome P450 monooxygenase FGSG_15680 could hydroxylate the fatty acid chain. Subsequent oxidation to the ketone by the oxidoreductase FGSG_00048 and transamination by aminotransferase FGSG_00049 could form 2-amino-decanoic acid. On the other hand, FGSG_15680 could also be responsible for the HO-modified glutamine at the gamma-position. Whether hydroxylation occurs on the fully assembled product or on the Gln residue prior to assembly into the gramillins requires further proof. The thioredoxin FGSG_00043 could also be required for the disulfide-bond formation between CysA and CysB. The specific involvement of the remaining proteins from the cluster is more difficult to discern, but could have broader regulatory (FGSG_00040 and FGSG_11657) or enzymatic functions (FGSG_00044 and FGSG_00045). The final C-domain of GRA1 does not possess the expected sequence of a termination CT domain, often implicated in macrocyclization and release of a cyclopeptidein fungal NRPs; and the thioesterase FGSG_00047 may act in concert with the terminal C-domain of GRA1 to catalyze the formation of the macrocyclic anhydride and release of the products. The sequence is that of Probable thioesterase FGSG_00047 from Gibberella zeae (strain ATCC MYA-4620 / CBS 123657 / FGSC 9075 / NRRL 31084 / PH-1) (Wheat head blight fungus).